Reading from the N-terminus, the 103-residue chain is Large ribosomal subunit protein bL21 (103 aa).

The protein belongs to the bacterial ribosomal protein bL21 family. As to quaternary structure, part of the 50S ribosomal subunit. Contacts protein L20.

Functionally, this protein binds to 23S rRNA in the presence of protein L20. This chain is Large ribosomal subunit protein bL21, found in Verminephrobacter eiseniae (strain EF01-2).